We begin with the raw amino-acid sequence, 260 residues long: Proliferating cell nuclear antigen (260 aa).

A DNA-binding region spans residues 61 to 80 (RCDRNLSMGMNLGSMAKILK).

Belongs to the PCNA family. As to quaternary structure, homotrimer. Forms a complex with activator 1 heteropentamer in the presence of ATP. Interacts with E2f. Interacts with the catalytic subunits of two DNA polymerase complexes: PolD1 from the delta complex and PolE1/DNApol-epsilon255 from the epsilon complex. As to expression, expressed at high levels in adult ovary.

It localises to the nucleus. It is found in the chromosome. Its subcellular location is the cytoplasm. Its function is as follows. Likely to be an auxiliary protein of DNA polymerase delta complex and is probably involved in the control of DNA replication and repair by increasing the polymerase's processibility. This is Proliferating cell nuclear antigen from Drosophila melanogaster (Fruit fly).